Here is a 305-residue protein sequence, read N- to C-terminus: MEEKDSCYHVPVMLRESLEGLDIRPDGIYVDVTFGGGGHSREILKRLGSEGELYGFDQDADAEHNVPADPRFTFVRSNFRYLYNFMRYYGESGEVDGLLADLGVSSHHFDDKDRGFSFRFDGTLDMRMNTRAGQTAADIVNNYTAEALADVFYLYGELKVSRKLASVLVKARETKKIETIGDFLEVIKPFTGKDKEKKFLAQVFQALRIEVNDEMRALKEMLRSTLRVLRPGGRLVVITYHSLEDRLVKNFLKTGNFEGKCEQDFFGNVRSPFRLVNNKVIVPTDEEVERNPRSRSAKLRIAEKV.

S-adenosyl-L-methionine contacts are provided by residues 37–39 (GGH), Asp-57, Phe-85, Asp-101, and His-108.

This sequence belongs to the methyltransferase superfamily. RsmH family.

Its subcellular location is the cytoplasm. It catalyses the reaction cytidine(1402) in 16S rRNA + S-adenosyl-L-methionine = N(4)-methylcytidine(1402) in 16S rRNA + S-adenosyl-L-homocysteine + H(+). In terms of biological role, specifically methylates the N4 position of cytidine in position 1402 (C1402) of 16S rRNA. The sequence is that of Ribosomal RNA small subunit methyltransferase H from Parabacteroides distasonis (strain ATCC 8503 / DSM 20701 / CIP 104284 / JCM 5825 / NCTC 11152).